The primary structure comprises 50 residues: Small ribosomal subunit protein uS14 (50 aa).

Positions 15, 18, 33, and 36 each coordinate Zn(2+).

This sequence belongs to the universal ribosomal protein uS14 family. Zinc-binding uS14 subfamily. As to quaternary structure, part of the 30S ribosomal subunit. Zn(2+) is required as a cofactor.

Binds 16S rRNA, required for the assembly of 30S particles. The protein is Small ribosomal subunit protein uS14 of Methanosarcina barkeri (strain Fusaro / DSM 804).